A 333-amino-acid polypeptide reads, in one-letter code: Transcription factor MYB94 (333 aa).

HTH myb-type domains are found at residues 9–65 (KIGV…RPGI) and 66–116 (KRGN…KKKL). DNA-binding regions (H-T-H motif) lie at residues 37–61 (WRSV…TNYL) and 89–112 (WAAI…NTHL). Over residues 134 to 154 (KDFSISNKNTTSHQSSNSSKG) the composition is skewed to polar residues. Disordered stretches follow at residues 134-157 (KDFS…GQWE) and 183-218 (PTNF…YPSG). Low complexity predominate over residues 196 to 209 (SSSSSSTTTTTTTT).

Expressed in germinating seeds, rosette and cauline leaves, flower buds, open flowers, stems and developing siliques.

Its subcellular location is the nucleus. Transcription activator involved in the activation of cuticular wax biosynthesis under drought stress. Binds directly to the promoters of genes involved in cuticular wax biosynthesis. Transactivates WSD1, KCS2/DAISY, CER1, CER2, FAR3 and ECR genes. Functions together with MYB96 in the activation of cuticular wax biosynthesis. The chain is Transcription factor MYB94 from Arabidopsis thaliana (Mouse-ear cress).